Reading from the N-terminus, the 320-residue chain is Pyrroline-5-carboxylate reductase 1, mitochondrial (320 aa).

Ser2 bears the N-acetylserine mark. Residues 6–11 (IGAGQL) and Ser34 contribute to the NADP(+) site. 9 residues coordinate NADPH: Ala8, Gln10, Leu11, Ser34, Asp36, Asn56, Val70, Lys71, and Ala97. Residues Asn56, 69 to 72 (AVKP), and 95 to 97 (CAA) contribute to the NADP(+) site. Residue Glu164 participates in L-proline binding. Asn230 contributes to the NADPH binding site. Residues Ala237 and Thr238 each contribute to the L-proline site. Ser278 carries the post-translational modification Phosphoserine. Positions 292–320 (LDSPPGTSLAPSGHSKLLPRSMAPAGKQD) are disordered.

This sequence belongs to the pyrroline-5-carboxylate reductase family. As to quaternary structure, homodecamer; composed of 5 homodimers. Interacts with LTO1.

The protein localises to the mitochondrion. The enzyme catalyses L-proline + NADP(+) = (S)-1-pyrroline-5-carboxylate + NADPH + 2 H(+). It carries out the reaction L-proline + NAD(+) = (S)-1-pyrroline-5-carboxylate + NADH + 2 H(+). Its pathway is amino-acid biosynthesis; L-proline biosynthesis; L-proline from L-glutamate 5-semialdehyde: step 1/1. Functionally, oxidoreductase that catalyzes the last step in proline biosynthesis, which corresponds to the reduction of pyrroline-5-carboxylate to L-proline using NAD(P)H. At physiologic concentrations, has higher specific activity in the presence of NADH. Involved in the cellular response to oxidative stress. This chain is Pyrroline-5-carboxylate reductase 1, mitochondrial (PYCR1), found in Bos taurus (Bovine).